The chain runs to 376 residues: Putative transcription factor egl-18 (376 aa).

4 disordered regions span residues 1-33 (MSIS…CSGC), 65-122 (NNEL…LPDF), 148-197 (MVQQ…SDIP), and 240-264 (ATPS…PNAA). A compositionally biased stretch (basic and acidic residues) spans 9 to 27 (TRPESAEQQHHEVLQRPSD). Composition is skewed to low complexity over residues 68–89 (LKSS…RSSP) and 165–175 (QQSVSPPQSKS). The segment covering 176 to 195 (VKIEDPMDQDVKQEESERSD) has biased composition (basic and acidic residues). The span at 241-250 (TPSSQSQDSS) shows a compositional bias: polar residues. The GATA-type zinc finger occupies 266 to 290 (CSNCRTDKTTAWRRDAEGKLVCNPC).

As to expression, expressed in differentiated seam cells. Expressed in the head and trunk.

It is found in the nucleus. In terms of biological role, probable transcription factor. Involved in embryonic development and in vulval development in larvae, acting redundantly, at least in part, with elt-6. Perhaps acting together with elt-6, may form a positive feedback loop to initiate and maintain lin-39 gene expression to ensure proper vulval precursor cell (VPC) fate specification. Together with elt-6, acts as a downstream target of the Wnt/beta-catenin asymmetry pathway, required to adopt or maintain the seam cell fate. Required in seam cells, acting redundantly with elt-6, to promote production of alae, expression of several seam-specific genes and maintenance of seam cells in an unfused state. Plays a role in longevity. May form a transcriptional circuit with GATA factors elt-3 and elt-6. The polypeptide is Putative transcription factor egl-18 (Caenorhabditis elegans).